A 1184-amino-acid chain; its full sequence is Protocadherin-12 (1184 aa).

Residues 1 to 24 (MMQLLQLLLGLLGPGGYLFLLGDC) form the signal peptide. Topologically, residues 25–718 (QEVTTLTVKY…PGALSMSMLT (694 aa)) are extracellular. Cadherin domains follow at residues 28–135 (TTLT…QPRF), 136–244 (PKGE…SPAF), 245–352 (AESS…IPSI), 355–460 (TWAS…APVF), and 461–565 (EKSR…APEV). Asn-415 is a glycosylation site (N-linked (GlcNAc...) asparagine). N-linked (GlcNAc...) asparagine glycans are attached at residues Asn-582, Asn-659, and Asn-662. Residues 600–711 (PAGTDTPPLA…LRDSARKPGA (112 aa)) enclose the Cadherin 6 domain. A helical transmembrane segment spans residues 719–739 (VICLAVLLGIFGLILALFMSI). At 740–1184 (CRTEKKDNRA…RGSSSSSRCL (445 aa)) the chain is on the cytoplasmic side. 2 disordered regions span residues 854–928 (RQRN…ESGP) and 973–1023 (QFQP…DPEE). Ser-859 carries the phosphoserine modification. The segment covering 1012 to 1023 (PEQEEGPLDPEE) has biased composition (acidic residues). Ser-1062 is subject to Phosphoserine. Residues 1153–1184 (SAASGMKVQGDPGGKTGTEGKSRGSSSSSRCL) form a disordered region. Over residues 1175–1184 (RGSSSSSRCL) the composition is skewed to low complexity.

Post-translationally, cleaved by ADAM10 close to the transmembrane domain to release the Protocadherin-12, secreted form in the serum. Cleavage results in reduced cellular adhesion in a cell migration assay. As to expression, expressed in highly vascularized tissues including the heart and placenta, but most tissues contain a low level of expression. Prominent expression in the spleen. Present in villous and extravillous trophoblast (at protein level).

The protein resides in the cell membrane. It localises to the cell junction. It is found in the secreted. Functionally, cellular adhesion molecule that may play an important role in cell-cell interactions at interendothelial junctions. Acts as a regulator of cell migration, probably via increasing cell-cell adhesion. Promotes homotypic calcium-dependent aggregation and adhesion and clusters at intercellular junctions. Unable to bind to catenins, weakly associates with the cytoskeleton. This Homo sapiens (Human) protein is Protocadherin-12.